A 587-amino-acid polypeptide reads, in one-letter code: Probable pectinesterase/pectinesterase inhibitor 61 (587 aa).

The disordered stretch occupies residues 1-23 (MGYDRLGPSGPSNPNQKDPATSL). Over residues 10–19 (GPSNPNQKDP) the composition is skewed to polar residues. A helical membrane pass occupies residues 35–55 (ILFTLAVLVVGVVCFGIFAGI). Positions 69 to 223 (RKPTQAISRT…SEMVSNCLAI (155 aa)) are pectinesterase inhibitor 61. The interval 273-571 (DITVSKDGSG…FTVAQFISGS (299 aa)) is pectinesterase 61. Substrate contacts are provided by T349 and Q379. D402 acts as the Proton donor; for pectinesterase activity in catalysis. C416 and C436 are oxidised to a cystine. The active-site Nucleophile; for pectinesterase activity is the D423. Residues R491 and W493 each contribute to the substrate site.

This sequence in the N-terminal section; belongs to the PMEI family. It in the C-terminal section; belongs to the pectinesterase family. Expressed in siliques, floral stems and rosettes leaves.

Its subcellular location is the membrane. It catalyses the reaction [(1-&gt;4)-alpha-D-galacturonosyl methyl ester](n) + n H2O = [(1-&gt;4)-alpha-D-galacturonosyl](n) + n methanol + n H(+). It functions in the pathway glycan metabolism; pectin degradation; 2-dehydro-3-deoxy-D-gluconate from pectin: step 1/5. In terms of biological role, acts in the modification of cell walls via demethylesterification of cell wall pectin. The sequence is that of Probable pectinesterase/pectinesterase inhibitor 61 (PME61) from Arabidopsis thaliana (Mouse-ear cress).